Consider the following 105-residue polypeptide: U2-lycotoxin-Ls1b (105 aa).

A signal peptide spans 1 to 17; the sequence is MIKYVLISALLVVAVYS. Positions 18-41 are excised as a propeptide; it reads FTIEDNEDALLEEAEDELDTEEER. Cystine bridges form between C51/C67, C58/C97, C60/C83, and C69/C81.

It belongs to the neurotoxin 04 (omega-agtx) family. 01 (type I omega-agtx) subfamily. In terms of tissue distribution, expressed by the venom gland.

Its subcellular location is the secreted. Insecticidal to house crickets. It induces an excitatory slow-onset impact that leads to irreversible spastic paralysis. It also modifies human voltage-gated potassium channel Kv1.5/KCNA5. Most likely, it binds to the voltage-sensing domain of the channel, suggesting it does not block the pore but prevents its opening at physiological membrane potentials. The recombinant peptide binds to the channel in an irreversible manner and slows down the hKv1.5 current activation kinetics. It is not toxic to mice, when intracranially injected (at 0.5 ug/g mouse). The protein is U2-lycotoxin-Ls1b of Lycosa singoriensis (Wolf spider).